The chain runs to 708 residues: Soluble guanylate cyclase gcy-37 (708 aa).

His105 lines the heme pocket. Positions 368–409 form a coiled coil; sequence LNQSRICQMELNKKLEETMKKMKKMTEELEVKKSQTDRLLFE. The region spanning 434–562 is the Guanylate cyclase domain; that stretch reads SVIFTDIPDF…NTVNVTKSIC (129 aa). Mg(2+) is bound by residues Asp439 and Asp483.

This sequence belongs to the adenylyl cyclase class-4/guanylyl cyclase family. Heterodimer; with other soluble guanylate cyclases. Heme serves as cofactor. As to expression, expressed in a small number of neurons, corresponding to URX, AQR and PQR neurons.

Its subcellular location is the cytoplasm. It carries out the reaction GTP = 3',5'-cyclic GMP + diphosphate. Its activity is regulated as follows. May be regulated by molecular oxygen. Probably not activated by nitric oxide (NO). Its function is as follows. Synthesizes cyclic GMP (cGMP) from GTP. May play a role in sensory neurons. The chain is Soluble guanylate cyclase gcy-37 (gcy-37) from Caenorhabditis elegans.